A 404-amino-acid chain; its full sequence is Diphosphomevalonate decarboxylase mvd1 (404 aa).

(R)-5-diphosphomevalonate contacts are provided by residues 25–28 (YWGK), arginine 82, 161–166 (SGSACR), and threonine 217.

The protein belongs to the diphosphomevalonate decarboxylase family. In terms of assembly, homodimer.

The catalysed reaction is (R)-5-diphosphomevalonate + ATP = isopentenyl diphosphate + ADP + phosphate + CO2. The protein operates within isoprenoid biosynthesis; isopentenyl diphosphate biosynthesis via mevalonate pathway; isopentenyl diphosphate from (R)-mevalonate: step 3/3. Functionally, diphosphomevalonate decarboxylase; part of the second module of ergosterol biosynthesis pathway that includes the middle steps of the pathway. Mvd1 converts diphosphomevalonate into isopentenyl diphosphate. The second module is carried out in the vacuole and involves the formation of farnesyl diphosphate, which is also an important intermediate in the biosynthesis of ubiquinone, dolichol, heme and prenylated proteins. Activity by the mevalonate kinase erg12 (AFUA_4G07780) first converts mevalonate into 5-phosphomevalonate. 5-phosphomevalonate is then further converted to 5-diphosphomevalonate by the phosphomevalonate kinase erg8 (AFUA_5G10680). The diphosphomevalonate decarboxylase mvd1 (AFUA_4G07130) then produces isopentenyl diphosphate. The isopentenyl-diphosphate delta-isomerase idi1 (AFUA_6G11160) then catalyzes the 1,3-allylic rearrangement of the homoallylic substrate isopentenyl (IPP) to its highly electrophilic allylic isomer, dimethylallyl diphosphate (DMAPP). Finally the farnesyl diphosphate synthase erg20 (AFUA_5G02450) catalyzes the sequential condensation of isopentenyl pyrophosphate with dimethylallyl pyrophosphate, and then with the resultant geranylpyrophosphate to the ultimate product farnesyl pyrophosphate. In Aspergillus fumigatus (strain ATCC MYA-4609 / CBS 101355 / FGSC A1100 / Af293) (Neosartorya fumigata), this protein is Diphosphomevalonate decarboxylase mvd1.